A 184-amino-acid chain; its full sequence is Photosystem I assembly protein Ycf4 (184 aa).

Helical transmembrane passes span 21–43 (NFCW…TSSY) and 58–80 (IFFP…SSYL).

It belongs to the Ycf4 family.

The protein resides in the plastid. The protein localises to the chloroplast thylakoid membrane. Functionally, seems to be required for the assembly of the photosystem I complex. The chain is Photosystem I assembly protein Ycf4 from Calycanthus floridus var. glaucus (Eastern sweetshrub).